The sequence spans 272 residues: Cytochrome c1 (272 aa).

An N-terminal signal peptide occupies residues 1–24 (MTTIVKRALVAAGMVLAIGGAAQA). Positions 61, 64, 65, and 200 each coordinate heme c. Residues 244–261 (LGLKVLLFLGVLTAMLLA) form a helical membrane-spanning segment.

As to quaternary structure, the main subunits of complex b-c1 are: cytochrome b, cytochrome c1 and the Rieske protein. Binds 1 heme c group covalently per subunit.

Its subcellular location is the cell membrane. Functionally, component of the ubiquinol-cytochrome c reductase complex (complex III or cytochrome b-c1 complex), which is a respiratory chain that generates an electrochemical potential coupled to ATP synthesis. The sequence is that of Cytochrome c1 (petC) from Rhodospirillum rubrum.